A 425-amino-acid polypeptide reads, in one-letter code: Imidazolonepropionase (425 aa).

2 residues coordinate Fe(3+): histidine 82 and histidine 84. Positions 82 and 84 each coordinate Zn(2+). Positions 91, 154, and 187 each coordinate 4-imidazolone-5-propanoate. Tyrosine 154 is an N-formimidoyl-L-glutamate binding site. Residue histidine 253 coordinates Fe(3+). Position 253 (histidine 253) interacts with Zn(2+). Glutamate 256 is a binding site for 4-imidazolone-5-propanoate. Aspartate 328 is a Fe(3+) binding site. Aspartate 328 serves as a coordination point for Zn(2+). Asparagine 330 and glycine 332 together coordinate N-formimidoyl-L-glutamate. Position 333 (serine 333) interacts with 4-imidazolone-5-propanoate.

It belongs to the metallo-dependent hydrolases superfamily. HutI family. It depends on Zn(2+) as a cofactor. Fe(3+) serves as cofactor.

The protein localises to the cytoplasm. It carries out the reaction 4-imidazolone-5-propanoate + H2O = N-formimidoyl-L-glutamate. It functions in the pathway amino-acid degradation; L-histidine degradation into L-glutamate; N-formimidoyl-L-glutamate from L-histidine: step 3/3. Functionally, catalyzes the hydrolytic cleavage of the carbon-nitrogen bond in imidazolone-5-propanoate to yield N-formimidoyl-L-glutamate. It is the third step in the universal histidine degradation pathway. This chain is Imidazolonepropionase, found in Symbiobacterium thermophilum (strain DSM 24528 / JCM 14929 / IAM 14863 / T).